The following is a 1362-amino-acid chain: DNA-directed RNA polymerase subunit beta' (1362 aa).

A compositionally biased stretch (basic residues) spans 1–14 (MTSSSKSRKSKSSK). The tract at residues 1–39 (MTSSSKSRKSKSSKASKAAKEAPVSASRPLSKTPPPFRN) is disordered. Over residues 15-27 (ASKAAKEAPVSAS) the composition is skewed to low complexity. Residues C248, C315, C322, and C325 each contribute to the Zn(2+) site. Positions 1316–1336 (TRHNIDPSASNFAAFTRPDAD) are disordered.

Belongs to the RNA polymerase beta' chain family. RpoC2 subfamily. In cyanobacteria the RNAP catalytic core is composed of 2 alpha, 1 beta, 1 beta', 1 gamma and 1 omega subunit. When a sigma factor is associated with the core the holoenzyme is formed, which can initiate transcription. Zn(2+) serves as cofactor.

It carries out the reaction RNA(n) + a ribonucleoside 5'-triphosphate = RNA(n+1) + diphosphate. DNA-dependent RNA polymerase catalyzes the transcription of DNA into RNA using the four ribonucleoside triphosphates as substrates. The chain is DNA-directed RNA polymerase subunit beta' from Synechococcus sp. (strain CC9605).